The primary structure comprises 156 residues: Flagellar assembly factor FliW (156 aa).

It belongs to the FliW family. Interacts with translational regulator CsrA and flagellin(s).

Its subcellular location is the cytoplasm. Acts as an anti-CsrA protein, binds CsrA and prevents it from repressing translation of its target genes, one of which is flagellin. Binds to flagellin and participates in the assembly of the flagellum. The polypeptide is Flagellar assembly factor FliW (Pseudothermotoga lettingae (strain ATCC BAA-301 / DSM 14385 / NBRC 107922 / TMO) (Thermotoga lettingae)).